An 896-amino-acid chain; its full sequence is Translation initiation factor IF-2 (896 aa).

The interval 1 to 260 (MDIENTNKPD…AQTNKKAHKA (260 aa)) is disordered. Over residues 19–34 (KAADSKPESGKTDSKR) the composition is skewed to basic and acidic residues. Residues 56-66 (EESSGGKASGK) are compositionally biased toward low complexity. Positions 85–136 (SVKEKKPDERLEETKKTAPRFEDKKSDAPSAQNEKRSFDSAKKEEKQTERKK) are enriched in basic and acidic residues. The span at 168 to 177 (RGQGNRPQRP) shows a compositional bias: low complexity. Residues 375-544 (PRPPVVTIMG…LLQAEVLELK (170 aa)) form the tr-type G domain. Residues 384–391 (GHVDHGKT) form a G1 region. 384–391 (GHVDHGKT) serves as a coordination point for GTP. The G2 stretch occupies residues 409–413 (GITQH). The interval 430 to 433 (DTPG) is G3. GTP is bound by residues 430 to 434 (DTPGH) and 484 to 487 (NKVD). Residues 484–487 (NKVD) form a G4 region. A G5 region spans residues 520 to 522 (SAL). Positions 877 to 896 (SDSEKYKAPEIKEEGTETDE) are disordered.

Belongs to the TRAFAC class translation factor GTPase superfamily. Classic translation factor GTPase family. IF-2 subfamily.

The protein localises to the cytoplasm. In terms of biological role, one of the essential components for the initiation of protein synthesis. Protects formylmethionyl-tRNA from spontaneous hydrolysis and promotes its binding to the 30S ribosomal subunits. Also involved in the hydrolysis of GTP during the formation of the 70S ribosomal complex. This chain is Translation initiation factor IF-2, found in Treponema denticola (strain ATCC 35405 / DSM 14222 / CIP 103919 / JCM 8153 / KCTC 15104).